The chain runs to 202 residues: Transcription factor MUTE (202 aa).

A bHLH domain is found at 1–49 (MSHIAVERNRRRQMNEHLKSLRSLTPCFYIKRGDQASIIGGVIEFIKEL).

In terms of assembly, homodimer. As to expression, leaf epidermis and flowers.

It is found in the nucleus. Functionally, transcription factor. Together with FMA and SPCH, regulates the stomata formation. Required for the differentiation of stomatal guard cells, by promoting successive asymmetric cell divisions and the formation of guard mother cells. Promotes the conversion of the leaf epidermis into stomata. This is Transcription factor MUTE (MUTE) from Arabidopsis thaliana (Mouse-ear cress).